The chain runs to 229 residues: Urease accessory protein UreF (229 aa).

Belongs to the UreF family. In terms of assembly, ureD, UreF and UreG form a complex that acts as a GTP-hydrolysis-dependent molecular chaperone, activating the urease apoprotein by helping to assemble the nickel containing metallocenter of UreC. The UreE protein probably delivers the nickel.

The protein resides in the cytoplasm. Functionally, required for maturation of urease via the functional incorporation of the urease nickel metallocenter. This Staphylococcus aureus (strain USA300) protein is Urease accessory protein UreF.